We begin with the raw amino-acid sequence, 636 residues long: Leucine-rich repeat and fibronectin type-III domain-containing protein 4 (636 aa).

The first 16 residues, 1 to 16 (MAPPLLLLLLASGAAA), serve as a signal peptide directing secretion. Residues 17 to 48 (CPLPCVCQNLSESLSTLCAHRGLLFVPPNVDR) enclose the LRRNT domain. At 17–518 (CPLPCVCQNL…LQAHVLGGTL (502 aa)) the chain is on the extracellular side. N-linked (GlcNAc...) asparagine glycosylation occurs at Asn25. 7 LRR repeats span residues 49–70 (RTVE…DFRN), 73–94 (GLVD…SFGD), 97–118 (SLRS…SLRG), 121–142 (NLQH…AFDD), 146–169 (SLED…GSMP), 170–191 (ALHT…VFAQ), and 194–215 (QLSR…PLFS). The LRRCT domain occupies 234–280 (NPLHCNCELLWLRRLARPDDLETCASPPTLAGRYFWAVPEGEFSCEP). Positions 281 to 367 (PLIARHTQRL…GEATARVELR (87 aa)) constitute an Ig-like domain. A disulfide bridge links Cys302 with Cys351. Asn333 carries an N-linked (GlcNAc...) asparagine glycan. The region spanning 405–502 (SEPAVQVTEV…GCAHFSTLPA (98 aa)) is the Fibronectin type-III domain. A helical membrane pass occupies residues 519–539 (TVAVGGVLVAALLVFTVALLV). The Cytoplasmic segment spans residues 540-636 (RGRGAGNGRL…SAERLEESVV (97 aa)). The interval 556–585 (VQSQTNGGTSPMPKSHPPRSPPPRPQRSCS) is disordered. Residues 569-580 (KSHPPRSPPPRP) are compositionally biased toward pro residues. Phosphoserine is present on residues Ser585 and Ser627. The PDZ-binding motif lies at 633 to 636 (ESVV).

This sequence belongs to the LRFN family. As to quaternary structure, forms heteromeric complexes with LRFN1 and LRFN2. Can form heteromeric complexes with LRFN3 and LRFN5. Unable to form homophilic interactions across cell junctions. Interacts with DLG1, DLG2, DLG3 and DLG4. In terms of processing, glycosylated.

The protein localises to the membrane. Functionally, promotes neurite outgrowth in hippocampal neurons. May play a role in redistributing DLG4 to the cell periphery. This is Leucine-rich repeat and fibronectin type-III domain-containing protein 4 (Lrfn4) from Rattus norvegicus (Rat).